A 28-amino-acid polypeptide reads, in one-letter code: trp operon leader peptide (28 aa).

This protein is involved in control of the biosynthesis of tryptophan. The sequence is that of trp operon leader peptide (trpL) from Serratia marcescens.